A 251-amino-acid polypeptide reads, in one-letter code: Tyrosine transport ATP-binding protein (251 aa).

Residues 2–248 (LQIKNLSKSF…TVEEILEKFE (247 aa)) enclose the ABC transporter domain. 39–46 (GSNGTGKS) is an ATP binding site.

This sequence belongs to the ABC transporter superfamily. As to quaternary structure, the complex is probably composed of two ATP-binding proteins (CDR20291_0806), two transmembrane proteins (CDR20291_0807) and a solute-binding protein (CDR20291_0805).

It is found in the cell membrane. It catalyses the reaction L-tyrosine(out) + ATP + H2O = L-tyrosine(in) + ADP + phosphate + H(+). Probably part of an ABC transporter complex involved in tyrosine uptake. May also import phenylalanine. Probably responsible for energy coupling to the transport system. In Clostridioides difficile (strain R20291) (Peptoclostridium difficile), this protein is Tyrosine transport ATP-binding protein.